Here is a 186-residue protein sequence, read N- to C-terminus: Elongation factor P (186 aa).

Belongs to the elongation factor P family.

It localises to the cytoplasm. The protein operates within protein biosynthesis; polypeptide chain elongation. Its function is as follows. Involved in peptide bond synthesis. Stimulates efficient translation and peptide-bond synthesis on native or reconstituted 70S ribosomes in vitro. Probably functions indirectly by altering the affinity of the ribosome for aminoacyl-tRNA, thus increasing their reactivity as acceptors for peptidyl transferase. This chain is Elongation factor P, found in Prochlorococcus marinus subsp. pastoris (strain CCMP1986 / NIES-2087 / MED4).